The primary structure comprises 456 residues: Zinc finger C2HC domain-containing protein 1C (456 aa).

Disordered stretches follow at residues 16–46 (MLPH…QSLK) and 85–113 (YPHC…SSGP). Composition is skewed to polar residues over residues 35 to 46 (YEQGDSSQQSLK) and 90 to 102 (GISQ…DSQG). Residues 211-265 (VQIRRLEAAGESLEEEIRRKQILLRGKLKKTEEELRRIQTQKEQAKENENGELQK) adopt a coiled-coil conformation. The segment at 336–388 (NKIRDPVSEPSVEKFSPPSETPVGALQGSARNSSLSMAPDSSGSSGSIEEPQL) is disordered. Over residues 368–382 (SSLSMAPDSSGSSGS) the composition is skewed to low complexity. A C2HC/C3H-type zinc finger spans residues 387-416 (QLGECSHCGRKFLSFRLERHSNICSRMRGS). Residues Cys391, Cys394, His406, and Cys410 each contribute to the Zn(2+) site.

This sequence belongs to the ZC2HC1 family. Zn(2+) is required as a cofactor.

This is Zinc finger C2HC domain-containing protein 1C (ZC2HC1C) from Homo sapiens (Human).